The chain runs to 647 residues: Knirps-related protein (647 aa).

The segment at residues 11–87 (NQTCKVCGEP…VGMSKSGSRY (77 aa)) is a DNA-binding region (nuclear receptor). NR C4-type zinc fingers lie at residues 14-34 (CKVCGEPAAGFHFGAFTCEGC) and 51-75 (CKNNGECIINKKNRTACKACRLKKC). Disordered regions lie at residues 111-142 (MAAHHNSQQAGGGSSGGSGGGQGMPNGVKGMS), 196-274 (HKHP…LSPF), 340-383 (GAGQ…LLTN), and 402-600 (SQQQ…NSIL). Positions 120 to 134 (AGGGSSGGSGGGQGM) are enriched in gly residues. Composition is skewed to low complexity over residues 200 to 223 (VVASPSVSSPDSHNSDSSVEVSSV) and 232 to 247 (GGKSNSGGSSSGADGS). Residues 248 to 260 (HSGGGGGGGGGVT) show a composition bias toward gly residues. Composition is skewed to polar residues over residues 370–381 (SPSTHANNNHLL) and 420–432 (DYSISALVTPNSE). Basic and acidic residues-rich tracts occupy residues 433 to 443 (SGRERVKSRQN) and 480 to 491 (QEERTPAGEDPR). The segment covering 502 to 519 (LSMKTTGSSLSSKSSSPE) has biased composition (low complexity). Residues 520–541 (IEPETEISSDVEKNDTDDDDED) show a composition bias toward acidic residues. A compositionally biased stretch (basic and acidic residues) spans 542–556 (LKVTPEEEISVRETA). Positions 567 to 579 (TTETAKTSIENTH) are enriched in polar residues. A compositionally biased stretch (low complexity) spans 580–599 (NNNNSISNNNNNNNNNNNSI).

The protein belongs to the nuclear hormone receptor family. NR0 subfamily.

The protein resides in the nucleus. The chain is Knirps-related protein (knrl) from Drosophila melanogaster (Fruit fly).